The primary structure comprises 240 residues: Probable ATP synthase 24 kDa subunit, mitochondrial (240 aa).

The transit peptide at Met-1–Phe-32 directs the protein to the mitochondrion. 2 stretches are compositionally biased toward basic and acidic residues: residues Ala-210–Glu-222 and Pro-229–Ile-240. The disordered stretch occupies residues Ala-210–Ile-240.

It is found in the mitochondrion. It localises to the mitochondrion inner membrane. Its function is as follows. Mitochondrial membrane ATP synthase (F(1)F(0) ATP synthase or Complex V) produces ATP from ADP in the presence of a proton gradient across the membrane which is generated by electron transport complexes of the respiratory chain. F-type ATPases consist of two structural domains, F(1) - containing the extramembraneous catalytic core and F(0) - containing the membrane proton channel, linked together by a central stalk and a peripheral stalk. During catalysis, ATP synthesis in the catalytic domain of F(1) is coupled via a rotary mechanism of the central stalk subunits to proton translocation. Part of the complex F(0) domain. The protein is Probable ATP synthase 24 kDa subunit, mitochondrial of Arabidopsis thaliana (Mouse-ear cress).